A 75-amino-acid chain; its full sequence is Small ribosomal subunit protein bS18 (75 aa).

The protein belongs to the bacterial ribosomal protein bS18 family. In terms of assembly, part of the 30S ribosomal subunit. Forms a tight heterodimer with protein bS6.

Functionally, binds as a heterodimer with protein bS6 to the central domain of the 16S rRNA, where it helps stabilize the platform of the 30S subunit. The protein is Small ribosomal subunit protein bS18 of Buchnera aphidicola subsp. Cinara cedri (strain Cc).